We begin with the raw amino-acid sequence, 246 residues long: Large ribosomal subunit protein uL30 (246 aa).

The protein belongs to the universal ribosomal protein uL30 family.

In terms of biological role, binds to G-rich structures in 28S rRNA and in mRNAs. Plays a regulatory role in the translation apparatus; inhibits cell-free translation of mRNAs. The sequence is that of Large ribosomal subunit protein uL30 (rpl7) from Dictyostelium discoideum (Social amoeba).